The chain runs to 485 residues: NADH-quinone oxidoreductase subunit N (485 aa).

14 consecutive transmembrane segments (helical) span residues 8–28 (LIAL…MLSI), 35–55 (FLNA…LWFV), 71–91 (GFAM…CTFA), 105–125 (FYLL…ANHL), 127–147 (ALFL…GYAF), 159–179 (YTIL…LVYA), 203–223 (LLAG…LVPF), 235–255 (PAPV…GVVM), 271–291 (VVLG…ALSQ), 297–317 (LLGY…IALQ), 326–346 (VGVY…VVSL), 373–393 (AAVM…LGFI), 408–430 (WWLV…RVAV), and 455–475 (IVVL…QPLI).

It belongs to the complex I subunit 2 family. NDH-1 is composed of 13 different subunits. Subunits NuoA, H, J, K, L, M, N constitute the membrane sector of the complex.

It localises to the cell inner membrane. It catalyses the reaction a quinone + NADH + 5 H(+)(in) = a quinol + NAD(+) + 4 H(+)(out). Functionally, NDH-1 shuttles electrons from NADH, via FMN and iron-sulfur (Fe-S) centers, to quinones in the respiratory chain. The immediate electron acceptor for the enzyme in this species is believed to be ubiquinone. Couples the redox reaction to proton translocation (for every two electrons transferred, four hydrogen ions are translocated across the cytoplasmic membrane), and thus conserves the redox energy in a proton gradient. This chain is NADH-quinone oxidoreductase subunit N, found in Salmonella dublin (strain CT_02021853).